The chain runs to 760 residues: U-box domain-containing protein 3 (760 aa).

Positions 146–217 (LMELMENALR…EQTEQLIELV (72 aa)) form a coiled coil. One can recognise a U-box domain in the interval 237 to 311 (SIPPYFRCPL…ASWLEANRIN (75 aa)). Polar residues predominate over residues 424–434 (ILGNHQSSSEM). The segment at 424 to 448 (ILGNHQSSSEMSPKKNLESSNNVNH) is disordered. 5 ARM repeats span residues 504–543 (IENRVHIGRCGAITPLLSLLYSEEKLTQEHAVTALLNLSI), 545–584 (ELNKAMIVEVGAIEPLVHVLNTGNDRAKENSAASLFSLSV), 586–626 (QVNR…NLSI), 628–666 (HDNKARIVQAKAVKYLVELLDPDLEMVDKAVALLANLSA), and 668–707 (GEGRQAIVREGGIPLLVETVDLGSQRGKENAASVLLQLCL).

It carries out the reaction S-ubiquitinyl-[E2 ubiquitin-conjugating enzyme]-L-cysteine + [acceptor protein]-L-lysine = [E2 ubiquitin-conjugating enzyme]-L-cysteine + N(6)-ubiquitinyl-[acceptor protein]-L-lysine.. It participates in protein modification; protein ubiquitination. Functionally, functions as an E3 ubiquitin ligase. This is U-box domain-containing protein 3 (PUB3) from Arabidopsis thaliana (Mouse-ear cress).